Here is a 226-residue protein sequence, read N- to C-terminus: MRRAIGVTVLAVVGLLLLPYLLTPLYRTGHPVSTLMIWRKLSGASMSRQWIDFAAMSPALPRSVVASEDAKFCSHHGIDWDSLRDVLDDAEDGEVKRGGSTITQQVAKNLFLWPGRSVIRKALEFPLAMWIDAVLPKQRILEIYLNIAEWGPDGQFGVEAGSRYAFGRSATGLTAREAALMAAILPNPVRRSARKPGPGVRRLAGTYMVRARAAELRSCWRDDRGS.

A helical membrane pass occupies residues 5–25 (IGVTVLAVVGLLLLPYLLTPL).

The protein belongs to the glycosyltransferase 51 family.

The protein localises to the cell inner membrane. It catalyses the reaction [GlcNAc-(1-&gt;4)-Mur2Ac(oyl-L-Ala-gamma-D-Glu-L-Lys-D-Ala-D-Ala)](n)-di-trans,octa-cis-undecaprenyl diphosphate + beta-D-GlcNAc-(1-&gt;4)-Mur2Ac(oyl-L-Ala-gamma-D-Glu-L-Lys-D-Ala-D-Ala)-di-trans,octa-cis-undecaprenyl diphosphate = [GlcNAc-(1-&gt;4)-Mur2Ac(oyl-L-Ala-gamma-D-Glu-L-Lys-D-Ala-D-Ala)](n+1)-di-trans,octa-cis-undecaprenyl diphosphate + di-trans,octa-cis-undecaprenyl diphosphate + H(+). Its pathway is cell wall biogenesis; peptidoglycan biosynthesis. Functionally, peptidoglycan polymerase that catalyzes glycan chain elongation from lipid-linked precursors. The chain is Biosynthetic peptidoglycan transglycosylase from Nitrobacter hamburgensis (strain DSM 10229 / NCIMB 13809 / X14).